The following is an 85-amino-acid chain: U4-theraphotoxin-Hhn1j (85 aa).

An N-terminal signal peptide occupies residues 1–22; that stretch reads MKVTLIAILTCAAVLVLHTTAA. The propeptide occupies 23–48; it reads EELEAESQLMEVGMPDTELAAVDEER. 3 cysteine pairs are disulfide-bonded: Cys52–Cys66, Cys56–Cys77, and Cys71–Cys82.

Belongs to the neurotoxin 12 (Hwtx-2) family. 02 (Hwtx-2) subfamily. As to expression, expressed by the venom gland.

It is found in the secreted. Functionally, postsynaptic neurotoxin. This Cyriopagopus hainanus (Chinese bird spider) protein is U4-theraphotoxin-Hhn1j.